The following is a 257-amino-acid chain: Ribosome-inactivating protein charybdin (257 aa).

Glu-167 is a catalytic residue. Cysteines 217 and 254 form a disulfide.

Belongs to the ribosome-inactivating protein family. Type 1 RIP subfamily.

It carries out the reaction Endohydrolysis of the N-glycosidic bond at one specific adenosine on the 28S rRNA.. Inhibits translation in rabbit reticulocytes. The protein is Ribosome-inactivating protein charybdin of Drimia maritima (Sea squill).